Reading from the N-terminus, the 530-residue chain is uncharacterized protein (530 aa).

The tract at residues asparagine 362 to methionine 408 is disordered. The segment covering glycine 388–threonine 403 has biased composition (basic and acidic residues).

This sequence belongs to the IIV-6 030L family.

This is an uncharacterized protein from Invertebrate iridescent virus 6 (IIV-6).